The primary structure comprises 279 residues: Urease accessory protein UreD (279 aa).

The protein belongs to the UreD family. UreD, UreF and UreG form a complex that acts as a GTP-hydrolysis-dependent molecular chaperone, activating the urease apoprotein by helping to assemble the nickel containing metallocenter of UreC. The UreE protein probably delivers the nickel.

It is found in the cytoplasm. Its function is as follows. Required for maturation of urease via the functional incorporation of the urease nickel metallocenter. This chain is Urease accessory protein UreD, found in Trichodesmium erythraeum (strain IMS101).